Here is a 226-residue protein sequence, read N- to C-terminus: ATP-dependent dethiobiotin synthetase BioD (226 aa).

12–17 (GIGKTV) contributes to the ATP binding site. Threonine 16 contacts Mg(2+). Lysine 37 is an active-site residue. Substrate is bound at residue threonine 41. ATP is bound by residues aspartate 49, 108–111 (EGAG), 169–170 (GS), and 197–199 (PAG). Mg(2+)-binding residues include aspartate 49 and glutamate 108.

The protein belongs to the dethiobiotin synthetase family. In terms of assembly, homodimer. Mg(2+) is required as a cofactor.

The protein resides in the cytoplasm. The enzyme catalyses (7R,8S)-7,8-diammoniononanoate + CO2 + ATP = (4R,5S)-dethiobiotin + ADP + phosphate + 3 H(+). It participates in cofactor biosynthesis; biotin biosynthesis; biotin from 7,8-diaminononanoate: step 1/2. Its function is as follows. Catalyzes a mechanistically unusual reaction, the ATP-dependent insertion of CO2 between the N7 and N8 nitrogen atoms of 7,8-diaminopelargonic acid (DAPA, also called 7,8-diammoniononanoate) to form a ureido ring. This Mycolicibacterium gilvum (strain PYR-GCK) (Mycobacterium gilvum (strain PYR-GCK)) protein is ATP-dependent dethiobiotin synthetase BioD.